The chain runs to 440 residues: Ribulose bisphosphate carboxylase large chain (440 aa).

N6,N6,N6-trimethyllysine is present on K4. Residues N113 and T163 each contribute to the substrate site. The active-site Proton acceptor is K165. Residue K167 participates in substrate binding. Residues K191, D193, and E194 each coordinate Mg(2+). N6-carboxylysine is present on K191. H284 (proton acceptor) is an active-site residue. Positions 285, 317, and 369 each coordinate substrate.

This sequence belongs to the RuBisCO large chain family. Type I subfamily. Heterohexadecamer of 8 large chains and 8 small chains; disulfide-linked. The disulfide link is formed within the large subunit homodimers. The cofactor is Mg(2+). Post-translationally, the disulfide bond which can form in the large chain dimeric partners within the hexadecamer appears to be associated with oxidative stress and protein turnover.

It is found in the plastid. The protein localises to the chloroplast. The enzyme catalyses 2 (2R)-3-phosphoglycerate + 2 H(+) = D-ribulose 1,5-bisphosphate + CO2 + H2O. It carries out the reaction D-ribulose 1,5-bisphosphate + O2 = 2-phosphoglycolate + (2R)-3-phosphoglycerate + 2 H(+). RuBisCO catalyzes two reactions: the carboxylation of D-ribulose 1,5-bisphosphate, the primary event in carbon dioxide fixation, as well as the oxidative fragmentation of the pentose substrate in the photorespiration process. Both reactions occur simultaneously and in competition at the same active site. This is Ribulose bisphosphate carboxylase large chain from Polystichum munitum (Western sword-fern).